A 454-amino-acid chain; its full sequence is Serine/arginine (SR)-type shuttling mRNA binding protein HRB1 (454 aa).

Residues Met1–Pro141 are disordered. Residues Ser14–Arg24 show a composition bias toward basic residues. 2 stretches are compositionally biased toward basic and acidic residues: residues Arg25 to Leu38 and Lys50 to Arg113. The residue at position 127 (Arg127) is an Omega-N-methylarginine. 2 consecutive RRM domains span residues Asn161–Pro237 and His261–Ser338. Ser338, Ser343, and Ser355 each carry phosphoserine. The RRM 3 domain maps to Arg376 to Arg453.

In terms of processing, methylated by HMT1.

It is found in the cytoplasm. The protein resides in the nucleus. The protein localises to the P-body. Its subcellular location is the stress granule. Functionally, binds to intron-containing transcripts and is involved in quality control for the export of spliced mRNAs from the nucleus. Binds to pre-mRNAs until splicing is completed or until faulty mRNAs are degraded. On correctly spliced mRNAs, GBP2 and HRB1 recruit MEX67 to allow nuclear export. On faulty mRNAs, GBP2 and HRB1 associate with the TRAMP complex that guides those pre-mRNAs to the exosome for degradation. The protein is Serine/arginine (SR)-type shuttling mRNA binding protein HRB1 of Saccharomyces cerevisiae (strain ATCC 204508 / S288c) (Baker's yeast).